The sequence spans 412 residues: Yellow-related salivary protein LJM17 (412 aa).

Positions 1–18 (MRFFFVFLAIVLFQGIHG) are cleaved as a signal peptide. Asn29 carries N-linked (GlcNAc...) asparagine glycosylation.

The protein belongs to the major royal jelly protein family. Salivary gland.

Its subcellular location is the secreted. Functionally, probably modulates blood feeding of sand flies on vertebrate species by binding and sequestering different mediators involved in the host response. Binds biogenic amines. Binds serotonin with high affinity. Binds noradrenaline but not adrenaline. Binds dopamine and octopamine. Binds histamine. Inhibits host smooth muscle contraction induced by histamine in bioassay with guinea pig ileum. Immunogenic; elicits antibody production in the host. Functions as a chemoattractant for host neutrophils; likely acts through a G-protein-coupled receptor and effect is dependent on calcium influx. In Lutzomyia longipalpis (Sand fly), this protein is Yellow-related salivary protein LJM17.